Here is a 281-residue protein sequence, read N- to C-terminus: Energy-coupling factor transporter ATP-binding protein EcfA1 (281 aa).

In terms of domain architecture, ABC transporter spans 7 to 242 (IAAEDITFRY…NQDLIKIGLD (236 aa)). An ATP-binding site is contributed by 42–49 (GHNGSGKS).

The protein belongs to the ABC transporter superfamily. Energy-coupling factor EcfA family. In terms of assembly, forms a stable energy-coupling factor (ECF) transporter complex composed of 2 membrane-embedded substrate-binding proteins (S component), 2 ATP-binding proteins (A component) and 2 transmembrane proteins (T component).

Its subcellular location is the cell membrane. Functionally, ATP-binding (A) component of a common energy-coupling factor (ECF) ABC-transporter complex. Unlike classic ABC transporters this ECF transporter provides the energy necessary to transport a number of different substrates. The polypeptide is Energy-coupling factor transporter ATP-binding protein EcfA1 (Bacillus licheniformis (strain ATCC 14580 / DSM 13 / JCM 2505 / CCUG 7422 / NBRC 12200 / NCIMB 9375 / NCTC 10341 / NRRL NRS-1264 / Gibson 46)).